The following is a 485-amino-acid chain: Glutamyl-tRNA(Gln) amidotransferase subunit A (485 aa).

Residues lysine 79 and serine 154 each act as charge relay system in the active site. Serine 178 acts as the Acyl-ester intermediate in catalysis.

The protein belongs to the amidase family. GatA subfamily. Heterotrimer of A, B and C subunits.

It catalyses the reaction L-glutamyl-tRNA(Gln) + L-glutamine + ATP + H2O = L-glutaminyl-tRNA(Gln) + L-glutamate + ADP + phosphate + H(+). Functionally, allows the formation of correctly charged Gln-tRNA(Gln) through the transamidation of misacylated Glu-tRNA(Gln) in organisms which lack glutaminyl-tRNA synthetase. The reaction takes place in the presence of glutamine and ATP through an activated gamma-phospho-Glu-tRNA(Gln). This chain is Glutamyl-tRNA(Gln) amidotransferase subunit A, found in Carboxydothermus hydrogenoformans (strain ATCC BAA-161 / DSM 6008 / Z-2901).